Consider the following 138-residue polypeptide: MLQPARRKYRKEQKGRNTGVATRGNSVAFGDFGLKCTDRGRLTARQLEAARRAISRHVKRGGRIWIRVFPDKPISQKPAEVRMGNGKGNPEYYVAEIQPGKIVFEIVGVTEELAREAFRLASAKLPLRTTFVSRMIGQ.

The segment covering 1-13 (MLQPARRKYRKEQ) has biased composition (basic residues). The tract at residues 1-22 (MLQPARRKYRKEQKGRNTGVAT) is disordered.

The protein belongs to the universal ribosomal protein uL16 family. In terms of assembly, part of the 50S ribosomal subunit.

In terms of biological role, binds 23S rRNA and is also seen to make contacts with the A and possibly P site tRNAs. This chain is Large ribosomal subunit protein uL16, found in Polaromonas naphthalenivorans (strain CJ2).